We begin with the raw amino-acid sequence, 183 residues long: Inosine/xanthosine triphosphatase (183 aa).

Position 75 (aspartate 75) interacts with Mg(2+). Aspartate 75–glycine 76 is a substrate binding site.

Belongs to the YjjX NTPase family. As to quaternary structure, homodimer. Mg(2+) serves as cofactor. It depends on Mn(2+) as a cofactor.

It catalyses the reaction XTP + H2O = XDP + phosphate + H(+). The catalysed reaction is ITP + H2O = IDP + phosphate + H(+). Functionally, phosphatase that hydrolyzes non-canonical purine nucleotides such as XTP and ITP to their respective diphosphate derivatives. Probably excludes non-canonical purines from DNA/RNA precursor pool, thus preventing their incorporation into DNA/RNA and avoiding chromosomal lesions. The chain is Inosine/xanthosine triphosphatase from Vibrio vulnificus (strain CMCP6).